Reading from the N-terminus, the 865-residue chain is Eukaryotic translation initiation factor 3 subunit C (865 aa).

Disordered stretches follow at residues 1–92 (MSRF…AKDK) and 206–243 (EDEEEPAPKPKKAAKVSFDEATAEDEEDDEGFARVGKG). 2 stretches are compositionally biased toward acidic residues: residues 16–54 (SSDEEELYSEEEEEELEDEGDDSDNDGSGDDDSDSDSDA) and 69–80 (DDDSSDEEDSDA). The span at 82 to 92 (VTTKVKSAKDK) shows a compositional bias: basic and acidic residues. Residues 226-235 (ATAEDEEDDE) are compositionally biased toward acidic residues. One can recognise a PCI domain in the interval 606-780 (FHMHINLELL…QTVIFRKGVE (175 aa)). Residues 801–865 (SNERTLEQRT…GGALGAAVRA (65 aa)) form a disordered region. Over residues 808-817 (QRTQGTSNAF) the composition is skewed to polar residues. A compositionally biased stretch (gly residues) spans 822-841 (GRGGRGGGRGRGGGRGGPRF).

It belongs to the eIF-3 subunit C family. In terms of assembly, component of the eukaryotic translation initiation factor 3 (eIF-3) complex.

It is found in the cytoplasm. Component of the eukaryotic translation initiation factor 3 (eIF-3) complex, which is involved in protein synthesis of a specialized repertoire of mRNAs and, together with other initiation factors, stimulates binding of mRNA and methionyl-tRNAi to the 40S ribosome. The eIF-3 complex specifically targets and initiates translation of a subset of mRNAs involved in cell proliferation. In Pyricularia oryzae (strain 70-15 / ATCC MYA-4617 / FGSC 8958) (Rice blast fungus), this protein is Eukaryotic translation initiation factor 3 subunit C.